The following is a 70-amino-acid chain: Beta-defensin 131B (70 aa).

Residues 1 to 22 (MRVLFFVFGVLSLMSTVPPTRS) form the signal peptide. 3 cysteine pairs are disulfide-bonded: Cys-29-Cys-56, Cys-36-Cys-50, and Cys-40-Cys-57.

It belongs to the beta-defensin family.

The protein resides in the secreted. Has antibacterial activity. The sequence is that of Beta-defensin 131B from Homo sapiens (Human).